Consider the following 63-residue polypeptide: Cecropin-C (63 aa).

The first 23 residues, 1 to 23, serve as a signal peptide directing secretion; that stretch reads MNFYKIFVFVALILAISIGQSEA. Position 62 is an arginine amide (arginine 62).

Belongs to the cecropin family.

It is found in the secreted. Cecropins have lytic and antibacterial activity against several Gram-positive and Gram-negative bacteria. The chain is Cecropin-C (CecC) from Drosophila mauritiana (Fruit fly).